The primary structure comprises 473 residues: Photosystem II CP43 reaction center protein (473 aa).

Residues 1–14 (MKILYSLRRFYHVE) constitute a propeptide that is removed on maturation. Residue Thr15 is modified to N-acetylthreonine. Thr15 is subject to Phosphothreonine. The next 5 membrane-spanning stretches (helical) occupy residues 69–93 (LFEVAHFVPEKPMYEQGLILLPHLA), 134–155 (LLGPETLEESFPFFGYVWKDRN), 178–200 (KALYFGGVYDTWAPGGGDVRKIT), 255–275 (KPFAWARRAFVWSGEAYLSYS), and 291–312 (WFNNTAYPSEFYGPTGPEASQA). Glu367 contributes to the [CaMn4O5] cluster binding site. Residues 447–471 (RARAAAAGFEKGIDRDLEPVLYMTP) form a helical membrane-spanning segment.

Belongs to the PsbB/PsbC family. PsbC subfamily. In terms of assembly, PSII is composed of 1 copy each of membrane proteins PsbA, PsbB, PsbC, PsbD, PsbE, PsbF, PsbH, PsbI, PsbJ, PsbK, PsbL, PsbM, PsbT, PsbX, PsbY, PsbZ, Psb30/Ycf12, at least 3 peripheral proteins of the oxygen-evolving complex and a large number of cofactors. It forms dimeric complexes. Binds multiple chlorophylls and provides some of the ligands for the Ca-4Mn-5O cluster of the oxygen-evolving complex. It may also provide a ligand for a Cl- that is required for oxygen evolution. PSII binds additional chlorophylls, carotenoids and specific lipids. serves as cofactor.

Its subcellular location is the plastid. The protein resides in the chloroplast thylakoid membrane. Its function is as follows. One of the components of the core complex of photosystem II (PSII). It binds chlorophyll and helps catalyze the primary light-induced photochemical processes of PSII. PSII is a light-driven water:plastoquinone oxidoreductase, using light energy to abstract electrons from H(2)O, generating O(2) and a proton gradient subsequently used for ATP formation. The protein is Photosystem II CP43 reaction center protein of Sorghum bicolor (Sorghum).